We begin with the raw amino-acid sequence, 181 residues long: Large ribosomal subunit protein uL30 (181 aa).

This sequence belongs to the universal ribosomal protein uL30 family. As to quaternary structure, part of the 50S ribosomal subunit.

The polypeptide is Large ribosomal subunit protein uL30 (Hyperthermus butylicus (strain DSM 5456 / JCM 9403 / PLM1-5)).